The following is a 437-amino-acid chain: tRNA-queuosine alpha-mannosyltransferase (437 aa).

The protein belongs to the glycosyltransferase group 1 family. Glycosyltransferase 4 subfamily.

The protein resides in the cytoplasm. The protein localises to the nucleus. The catalysed reaction is queuosine(34) in tRNA(Asp) + GDP-alpha-D-mannose = O-4''-alpha-D-mannosylqueuosine(34) in tRNA(Asp) + GDP + H(+). Functionally, glycosyltransferase that specifically catalyzes mannosylation of cytoplasmic tRNA(Asp) modified with queuosine at position 34 (queuosine(34)). Mannosylates the cyclopentene moiety of queuosine(34) in tRNA(Asp) to form mannosyl-queuosine(34). Mannosylation of queuosine(34) in tRNA(Asp) is required to slow-down elongation at cognate codons, GAC and GAU, thereby regulating protein translation. In Xenopus laevis (African clawed frog), this protein is tRNA-queuosine alpha-mannosyltransferase (gtdc1).